A 124-amino-acid chain; its full sequence is Acidic phospholipase A2 (124 aa).

Cystine bridges form between Cys-26/Cys-116, Cys-28/Cys-44, Cys-43/Cys-95, Cys-49/Cys-124, Cys-50/Cys-88, Cys-57/Cys-81, and Cys-75/Cys-86. The Ca(2+) site is built by Tyr-27, Gly-29, and Gly-31. Residue His-47 is part of the active site. A Ca(2+)-binding site is contributed by Asp-48. Asp-89 is a catalytic residue.

The protein belongs to the phospholipase A2 family. Group II subfamily. D49 sub-subfamily. In terms of assembly, monomer. The cofactor is Ca(2+). In terms of tissue distribution, expressed by the venom gland.

The protein localises to the secreted. The catalysed reaction is a 1,2-diacyl-sn-glycero-3-phosphocholine + H2O = a 1-acyl-sn-glycero-3-phosphocholine + a fatty acid + H(+). Its function is as follows. Snake venom phospholipase A2 (PLA2) that acts in vivo as an anti-thrombotic agent. Inhibits platelet aggregation induced by ADP, arachidonic acid, and thrombin. PLA2 catalyzes the calcium-dependent hydrolysis of the 2-acyl groups in 3-sn-phosphoglycerides. This is Acidic phospholipase A2 from Gloydius halys (Chinese water mocassin).